The sequence spans 1544 residues: Arf-GAP with Rho-GAP domain, ANK repeat and PH domain-containing protein 3 (1544 aa).

The region spanning 4–68 is the SAM domain; the sequence is PQDLDIAVWL…LRLLQTGTEE (65 aa). 2 disordered regions span residues 64–147 and 167–194; these read TGTE…EQSS and GRAQ…PTTG. Composition is skewed to pro residues over residues 82-97 and 130-139; these read SPSP…PVPK and EPSPRPPPLP. PH domains follow at residues 287–379 and 394–483; these read TPLL…SCLK and RPLR…EAVT. Positions 480–611 constitute an Arf-GAP domain; the sequence is EAVTETLSDY…LFRKPHPQYP (132 aa). The segment at 504 to 527 adopts a C4-type zinc-finger fold; that stretch reads CADCGSSRPDWAAVNLGVVICKQC. Residues 907–1088 enclose the Rho-GAP domain; sequence TGLQEQQMSR…ELIDGYISVF (182 aa). Residues 1117 to 1210 form the Ras-associating domain; the sequence is GDLIMEVYIE…ASLLLKKVPL (94 aa). One can recognise a PH 3 domain in the interval 1223-1325; the sequence is ESPRVGLLRC…WTTSILKAQH (103 aa). The residue at position 1348 (threonine 1348) is a Phosphothreonine. Residues tyrosine 1403 and tyrosine 1408 each carry the phosphotyrosine modification. Residues 1422–1544 are disordered; that stretch reads STSFSTTREW…SSPPSSQPLT (123 aa). Over residues 1438–1457 the composition is skewed to polar residues; sequence PLTSQKSLDQPFLSKSSTLG. Residues serine 1444 and serine 1480 each carry the phosphoserine modification. Composition is skewed to low complexity over residues 1482–1492 and 1502–1527; these read EEQLLQELSSL and GLGS…TPGF.

In terms of assembly, interacts (via SAM domain) with INPPL1/SHIP2. Tyrosine phosphorylated at a low basal level. PDGF treatment stimulates phosphorylation. Tyrosine phosphorylation is increased in cells that are in the process of becoming attached to a substrate and that start spreading and flattening.

It is found in the cytoplasm. It localises to the cytoskeleton. Its subcellular location is the cell membrane. The protein resides in the cell projection. The protein localises to the lamellipodium. It is found in the ruffle. Phosphatidylinositol 3,4,5-trisphosphate-dependent GTPase-activating protein that modulates actin cytoskeleton remodeling by regulating ARF and RHO family members. Is activated by phosphatidylinositol 3,4,5-trisphosphate (PtdIns(3,4,5)P3) binding. Can be activated by phosphatidylinositol 3,4-bisphosphate (PtdIns(3,4,5)P2) binding, albeit with lower efficiency. Acts on ARF6, RAC1, RHOA and CDC42. Plays a role in the internalization of anthrax toxin. The sequence is that of Arf-GAP with Rho-GAP domain, ANK repeat and PH domain-containing protein 3 (ARAP3) from Homo sapiens (Human).